The sequence spans 280 residues: Hydroxyethylthiazole kinase (280 aa).

M50 provides a ligand contact to substrate. 2 residues coordinate ATP: K125 and T178. A substrate-binding site is contributed by G205.

The protein belongs to the Thz kinase family. Mg(2+) is required as a cofactor.

The enzyme catalyses 5-(2-hydroxyethyl)-4-methylthiazole + ATP = 4-methyl-5-(2-phosphooxyethyl)-thiazole + ADP + H(+). Its pathway is cofactor biosynthesis; thiamine diphosphate biosynthesis; 4-methyl-5-(2-phosphoethyl)-thiazole from 5-(2-hydroxyethyl)-4-methylthiazole: step 1/1. Its function is as follows. Catalyzes the phosphorylation of the hydroxyl group of 4-methyl-5-beta-hydroxyethylthiazole (THZ). The sequence is that of Hydroxyethylthiazole kinase from Lacticaseibacillus casei (strain BL23) (Lactobacillus casei).